A 190-amino-acid polypeptide reads, in one-letter code: Glutathione peroxidase 2 (190 aa).

U40 is a catalytic residue. A non-standard amino acid (selenocysteine) is located at residue U40.

The protein belongs to the glutathione peroxidase family. As to quaternary structure, homotetramer. In terms of tissue distribution, mucosal epithelium of the gastrointestinal tract.

The protein localises to the cytoplasm. Its subcellular location is the cytosol. It catalyses the reaction 2 glutathione + H2O2 = glutathione disulfide + 2 H2O. The catalysed reaction is a hydroperoxy polyunsaturated fatty acid + 2 glutathione = a hydroxy polyunsaturated fatty acid + glutathione disulfide + H2O. It carries out the reaction tert-butyl hydroperoxide + 2 glutathione = tert-butanol + glutathione disulfide + H2O. The enzyme catalyses cumene hydroperoxide + 2 glutathione = 2-phenylpropan-2-ol + glutathione disulfide + H2O. It catalyses the reaction (13S)-hydroperoxy-(9Z,11E)-octadecadienoate + 2 glutathione = (13S)-hydroxy-(9Z,11E)-octadecadienoate + glutathione disulfide + H2O. The catalysed reaction is (5S)-hydroperoxy-(6E,8Z,11Z,14Z)-eicosatetraenoate + 2 glutathione = (5S)-hydroxy-(6E,8Z,11Z,14Z)-eicosatetraenoate + glutathione disulfide + H2O. It carries out the reaction (12R)-hydroperoxy-(5Z,8Z,10E,14Z)-eicosatetraenoate + 2 glutathione = (12R)-hydroxy-(5Z,8Z,10E,14Z)-eicosatetraenoate + glutathione disulfide + H2O. The enzyme catalyses (15S)-hydroperoxy-(5Z,8Z,11Z,13E)-eicosatetraenoate + 2 glutathione = (15S)-hydroxy-(5Z,8Z,11Z,13E)-eicosatetraenoate + glutathione disulfide + H2O. Functionally, catalyzes the reduction of hydroperoxides in a glutathione-dependent manner thus regulating cellular redox homeostasis. Can reduce small soluble hydroperoxide such as H2O2. Can reduce cumene hydroperoxide and tert-butyl hydroperoxide, as well as several fatty acid-derived hydroperoxides. Cannot reduce phosphatidycholine hydroperoxide. The polypeptide is Glutathione peroxidase 2 (Gpx2) (Rattus norvegicus (Rat)).